A 150-amino-acid polypeptide reads, in one-letter code: Small ribosomal subunit protein uS11y (150 aa).

A disordered region spans residues 129–150; it reads EDVTPVPTDSTRRKGGRRGRRL. The segment covering 141 to 150 has biased composition (basic residues); sequence RKGGRRGRRL.

It belongs to the universal ribosomal protein uS11 family.

This Zea mays (Maize) protein is Small ribosomal subunit protein uS11y.